The primary structure comprises 314 residues: MDVFDGLPDPIIVDILNKVGDVKTLLRCSSLSKRFNSLVPQSESLTLRLDHSVSDSPVVTSIFRSLFNGLVSLLSKPAKPITITTLSPSLPFKILSRFDRIRNLDVELPGGDVKLEKGAAVKWKAEFGKTLKSCVIVAFRSAGTVSSPVAVEGESDAEFVTGLKTRVVWTISALMAASSRHYLMREVVKEHEEIESLVMRDKEREGTVVMNEEGLKELRNTEARVEDEERVVKNKRSVVPSVRMSMRHAPSLKLKSGICLESATLVIVRPSGADFEVGDDAELATEAFVGDCMYGEAVVALLKCKKNALEMNSF.

Positions 1 to 49 constitute an F-box domain; sequence MDVFDGLPDPIIVDILNKVGDVKTLLRCSSLSKRFNSLVPQSESLTLRL.

Part of a SCF (ASK-cullin-F-box) protein ligase complex.

The protein localises to the nucleus. Its pathway is protein modification; protein ubiquitination. In terms of biological role, component of SCF(ASK-cullin-F-box) E3 ubiquitin ligase complexes, which may mediate the ubiquitination and subsequent proteasomal degradation of target proteins. The protein is F-box protein AUF2 of Arabidopsis thaliana (Mouse-ear cress).